The sequence spans 544 residues: Probable protein kinase UbiB (544 aa).

Residues 123 to 505 (EFDEQALASA…GRQKSHNVRS (383 aa)) enclose the Protein kinase domain. ATP is bound by residues 129 to 137 (LASASIAQV) and Lys-156. The Proton acceptor role is filled by Asp-291. The helical transmembrane segment at 522–540 (LPLWLSCGTLVTVLLVLLL) threads the bilayer.

It belongs to the ABC1 family. UbiB subfamily.

It localises to the cell inner membrane. It participates in cofactor biosynthesis; ubiquinone biosynthesis [regulation]. Is probably a protein kinase regulator of UbiI activity which is involved in aerobic coenzyme Q (ubiquinone) biosynthesis. In Actinobacillus pleuropneumoniae serotype 7 (strain AP76), this protein is Probable protein kinase UbiB.